A 143-amino-acid chain; its full sequence is Transcriptional regulator MraZ (143 aa).

2 consecutive SpoVT-AbrB domains span residues 5-47 and 76-119; these read TYTP…PREE and TDEQ…DAQA.

The protein belongs to the MraZ family. In terms of assembly, forms oligomers.

Its subcellular location is the cytoplasm. It is found in the nucleoid. The polypeptide is Transcriptional regulator MraZ (Rhodococcus opacus (strain B4)).